Here is a 792-residue protein sequence, read N- to C-terminus: uncharacterized protein (792 aa).

Repeat copies occupy residues 91-102 (NSSTNATTTASI), 103-114 (NVRTSATTTASI), 115-126 (NVRTSATTTEST), 127-138 (NSNTNATTTEST), 139-150 (NSSTNATTTASI), 151-162 (NVRTSATTTEST), 163-174 (NSSTNATTTASI), 175-186 (NVRTSATTTEST), 187-198 (NSSTNATTTASI), 199-210 (NVRTSATTTEST), 211-222 (NSNTNASTNATT), 223-234 (NSSTNATTTAST), 235-246 (NVRTSATTNATT), 247-258 (NSSTNATTTAST), 259-270 (NVRTSATTTAST), 271-282 (NVRTSATTTASI), 283-294 (NVRTSATTTESI), 295-306 (NSSTNATTTEST), 307-318 (NSNTSATTTEST), 319-330 (DSNTNATTTASI), 331-342 (NVRTSATTTEST), 343-354 (NSNTSATTTEST), 355-366 (DSNTSATTTAST), 367-378 (NSSTNATTTAST), and 379-390 (NSSTNATTTEST). The interval 91-390 (NSSTNATTTA…STNATTTEST (300 aa)) is 25 X 12 AA tandem repeat of N-[SV]-[RS]-T-[NS]-A-T-T-T-[AE]-[ST]-[IT]. The interval 113 to 417 (SINVRTSATT…RFHPVTDINK (305 aa)) is disordered. The segment covering 118–393 (TSATTTESTN…ATTTESTNAS (276 aa)) has biased composition (low complexity). The segment covering 394-417 (AKEDANKDGNAEDNRFHPVTDINK) has biased composition (basic and acidic residues).

This is an uncharacterized protein from Saccharomyces cerevisiae (strain ATCC 204508 / S288c) (Baker's yeast).